Consider the following 409-residue polypeptide: Lissencephaly-1 homolog (409 aa).

The LisH domain occupies 7–39 (QREELNQAIADYLGTNGYADSLEAFRKEADLST). Positions 54–81 (TSVIRLQKKVMELEAKLTEAEKEVIEGA) form a coiled coil. 7 WD repeats span residues 104–145 (GHRA…RSLK), 146–185 (GHTDSVQDVAFDAQGKLLVSCSADLSIKLWDFQQSYACVK), 189–228 (GHDHNVSSVAFVPAGDYVLSASRDRTIKMWEVATGYCVKT), 231–270 (GHREWVRMVRVHIEGSLFATCSNDHTIRVWLTNSKDCKVE), 273–332 (DHEH…CLLT), 335–374 (GHDNWVRGLAFHPGGKYLVSASDDKTIRVWDLRNKRCMKT), and 377–409 (AHQHFCTSIDFHKAHPYVISGSVDQTVKVWECR).

It belongs to the WD repeat LIS1/nudF family.

The protein localises to the cytoplasm. It localises to the cytoskeleton. Its subcellular location is the microtubule organizing center. The protein resides in the centrosome. In terms of biological role, positively regulates the activity of the minus-end directed microtubule motor protein dynein. May enhance dynein-mediated microtubule sliding by targeting dynein to the microtubule plus end. Required for several dynein- and microtubule-dependent processes. This chain is Lissencephaly-1 homolog, found in Drosophila willistoni (Fruit fly).